Here is a 129-residue protein sequence, read N- to C-terminus: KVFERCELARTLKELGLDGYKGVSLANWLCLTKWESSYNTKATNYNPGSESTDYGIFQINSKFWCNDGKTPNAVDGCHVSCSELMENNIAKAVACAKQIVSEQGITAWVAWKSHCRDHDVSSYVEGCTL.

A C-type lysozyme domain is found at 1 to 129; the sequence is KVFERCELAR…VSSYVEGCTL (129 aa). 4 disulfide bridges follow: Cys-6/Cys-127, Cys-30/Cys-115, Cys-65/Cys-81, and Cys-77/Cys-95. Residues Glu-35 and Asp-53 contribute to the active site.

Belongs to the glycosyl hydrolase 22 family. In terms of assembly, monomer.

The catalysed reaction is Hydrolysis of (1-&gt;4)-beta-linkages between N-acetylmuramic acid and N-acetyl-D-glucosamine residues in a peptidoglycan and between N-acetyl-D-glucosamine residues in chitodextrins.. Its function is as follows. Lysozymes have primarily a bacteriolytic function; those in tissues and body fluids are associated with the monocyte-macrophage system and enhance the activity of immunoagents. The chain is Lysozyme C-2 from Capra hircus (Goat).